Consider the following 115-residue polypeptide: Large ribosomal subunit protein bL21 (115 aa).

It belongs to the bacterial ribosomal protein bL21 family. Part of the 50S ribosomal subunit. Contacts protein L20.

This protein binds to 23S rRNA in the presence of protein L20. The chain is Large ribosomal subunit protein bL21 from Coxiella burnetii (strain Dugway 5J108-111).